The primary structure comprises 445 residues: Aminopeptidase S (445 aa).

Residues 1–45 form the signal peptide; sequence MRPNRFSLRRSPTAVAAVALAAVLAAGAPAAQAAGAAAPTAAAAA. The Ca(2+) site is built by D48 and I49. 2 residues coordinate Zn(2+): H130 and D142. Residue E176 is the Proton acceptor of the active site. Residues E177, D205, and H292 each contribute to the Zn(2+) site. C290 and C295 are oxidised to a cystine. Ca(2+) is bound by residues D307 and D311. A P/Homo B domain is found at 325–445; that stretch reads GEPPTGEGVF…GYIDSWKLTF (121 aa). Residues 330 to 445 constitute a propeptide, removed in mature form; that stretch reads GEGVFSNTTD…GYIDSWKLTF (116 aa).

The protein belongs to the peptidase M28 family. M28A subfamily. As to quaternary structure, monomer. Ca(2+) is required as a cofactor. Requires Zn(2+) as cofactor. Mn(2+) serves as cofactor. The cofactor is Co(2+).

The protein resides in the secreted. It carries out the reaction Release of an N-terminal amino acid with a preference for large hydrophobic amino-terminus residues.. With respect to regulation, calcium activates the enzyme, inhibited by 1,10-phenanthroline, EDTA and EGTA. End-product inhibited by L-amino acids. Non-competitively inhibited by NaF and NaH(2)PO(4). An exopeptidase specific for larger hydrophobic amino acids (especially leucine), no cleavage occurs if the next residue is proline. This chain is Aminopeptidase S, found in Streptomyces griseus subsp. griseus (strain JCM 4626 / CBS 651.72 / NBRC 13350 / KCC S-0626 / ISP 5235).